The sequence spans 248 residues: MKNIATGDVLERIRRLAPSHVTAPFKTVAEWREWQLSEGQKRCEEINRQNRQLRVEKILNRSGIQPLHRKCSFSNYQVQNEGQRYALSQAKSIADELMTGCTNFAFSGKPGTGKNHLAAAIGNRLLKDGQTVIVVTVADVMSALHASYDDGQSGEKFLRELCEVDLLVLDEIGIQRETKNEQVVLHQIVDRRTASMRSVGMLTNLNYEAMKTLLGERIMDRMTMNGGRWVNFNWESWRPNVVQPGIAK.

Residues 33 to 57 are a coiled coil; that stretch reads EWQLSEGQKRCEEINRQNRQLRVEK.

This is an uncharacterized protein from Escherichia coli (strain K12).